We begin with the raw amino-acid sequence, 362 residues long: Aminomethyltransferase (362 aa).

This sequence belongs to the GcvT family. As to quaternary structure, the glycine cleavage system is composed of four proteins: P, T, L and H.

The enzyme catalyses N(6)-[(R)-S(8)-aminomethyldihydrolipoyl]-L-lysyl-[protein] + (6S)-5,6,7,8-tetrahydrofolate = N(6)-[(R)-dihydrolipoyl]-L-lysyl-[protein] + (6R)-5,10-methylene-5,6,7,8-tetrahydrofolate + NH4(+). In terms of biological role, the glycine cleavage system catalyzes the degradation of glycine. This Chlorobium limicola (strain DSM 245 / NBRC 103803 / 6330) protein is Aminomethyltransferase.